The sequence spans 610 residues: UvrABC system protein C (610 aa).

Residues 16–94 (SQPGVYRMYD…IKLYQPRYNV (79 aa)) form the GIY-YIG domain. A UVR domain is found at 204–239 (DQVLTQLIARMEKASQDLAFEEAARIRDQIQAVRRV).

This sequence belongs to the UvrC family. In terms of assembly, interacts with UvrB in an incision complex.

It is found in the cytoplasm. Its function is as follows. The UvrABC repair system catalyzes the recognition and processing of DNA lesions. UvrC both incises the 5' and 3' sides of the lesion. The N-terminal half is responsible for the 3' incision and the C-terminal half is responsible for the 5' incision. This Salmonella agona (strain SL483) protein is UvrABC system protein C.